We begin with the raw amino-acid sequence, 154 residues long: Ecotin-like protein 2 (154 aa).

It belongs to the protease inhibitor I11 (ecotin) family.

In Trypanosoma brucei brucei (strain 927/4 GUTat10.1), this protein is Ecotin-like protein 2.